A 124-amino-acid polypeptide reads, in one-letter code: Late histone H2A.2.1 (124 aa).

Basic residues predominate over residues 1 to 18; that stretch reads MSGRGKGAKAKSKAKSRS. Positions 1–21 are disordered; the sequence is MSGRGKGAKAKSKAKSRSSRA. S2 is modified (N-acetylserine). Phosphoserine is present on S2. N5-methylglutamine is present on Q104. A Glycyl lysine isopeptide (Lys-Gly) (interchain with G-Cter in ubiquitin) cross-link involves residue K119.

The protein belongs to the histone H2A family. In terms of assembly, the nucleosome is a histone octamer containing two molecules each of H2A, H2B, H3 and H4 assembled in one H3-H4 heterotetramer and two H2A-H2B heterodimers. The octamer wraps approximately 147 bp of DNA. Post-translationally, monoubiquitination of Lys-119 gives a specific tag for epigenetic transcriptional repression. In terms of processing, phosphorylation of Ser-2 directly represses transcription.

The protein resides in the nucleus. It is found in the chromosome. In terms of biological role, core component of nucleosome. Nucleosomes wrap and compact DNA into chromatin, limiting DNA accessibility to the cellular machineries which require DNA as a template. Histones thereby play a central role in transcription regulation, DNA repair, DNA replication and chromosomal stability. DNA accessibility is regulated via a complex set of post-translational modifications of histones, also called histone code, and nucleosome remodeling. The polypeptide is Late histone H2A.2.1 (Psammechinus miliaris (Green sea urchin)).